Here is a 172-residue protein sequence, read N- to C-terminus: Ribosome maturation factor RimM (172 aa).

A PRC barrel domain is found at 95 to 168 (AEGEFYYHQI…RVDVEIMEGL (74 aa)).

It belongs to the RimM family. Binds ribosomal protein uS19.

It localises to the cytoplasm. Functionally, an accessory protein needed during the final step in the assembly of 30S ribosomal subunit, possibly for assembly of the head region. Essential for efficient processing of 16S rRNA. May be needed both before and after RbfA during the maturation of 16S rRNA. It has affinity for free ribosomal 30S subunits but not for 70S ribosomes. In Streptococcus equi subsp. equi (strain 4047), this protein is Ribosome maturation factor RimM.